The following is a 343-amino-acid chain: MSEPNTPLHAQPNEQLDLNNLNDLDEKDIDDLNLDPNSDVEISADSGDVVNSNIDNVIWQRNCNKKRRYHTPEFNDVYNETNNTINDVTMLDDVDDFQPRINVSSPFSSATKLSELLPNDHNGTSHPRRLSMSQQSKFISYVDDQLLQIQRKFVQSRGLNIKNGYASLTPLLQDLKTLVDFVWYSIAHVPNSDYLLQSEEKRHCPDSRNPKDTCGYSSYFGQGSYLIKIADDLIDYVEKFTFKNMEDSEINDTLSKLFKLFFILDRIFVILTDDNDNCKEVPKTSSASKNIAGLNGTDIVRLKGIAERTRVRLPIFLESQGIHGYHYELSKIYEGFLDHANSF.

Tyrosine 69 is subject to Phosphotyrosine. Phosphothreonine occurs at positions 71 and 84. Residues serine 104, serine 105, serine 108, and serine 342 each carry the phosphoserine modification.

Component of the general transcription factor TFIIH, composed of a 7-subunit TFIIH core complex composed of XPB/SSL2, XPD/RAD3, SSL1, TFB1, TFB2, TFB4 and TFB5 which is active in NER; the 3-subunit CTD-kinase module TFIIK composed of CCL1, KIN28, and TFB3 which is active in transcription; as well as TFB6 that regulates SSL2 association with the complex. Post-translationally, phosphorylation leads the dissociation of from SSL2.

It is found in the cytoplasm. Its subcellular location is the nucleus. Its function is as follows. Component of the general transcription and DNA repair factor IIH (TFIIH) core complex, which is involved in general and transcription-coupled nucleotide excision repair (NER) of damaged DNA and, when complexed to TFIIK, in RNA transcription by RNA polymerase II. In NER, TFIIH acts by opening DNA around the lesion to allow the excision of the damaged oligonucleotide and its replacement by a new DNA fragment. In transcription, TFIIH has an essential role in transcription initiation. When the pre-initiation complex (PIC) has been established, TFIIH is required for promoter opening and promoter escape. Phosphorylation of the C-terminal tail (CTD) of the largest subunit of RNA polymerase II by the kinase module TFIIK controls the initiation of transcription. TFB6 facilitates dissociation of the SSL2 helicase from TFIIH after transcription initiation. The polypeptide is General transcription and DNA repair factor IIH subunit TFB6 (Saccharomyces cerevisiae (strain ATCC 204508 / S288c) (Baker's yeast)).